Consider the following 298-residue polypeptide: Lactose transport system permease protein LacF (298 aa).

Transmembrane regions (helical) follow at residues 17-37 (GWLF…YPIL), 77-97 (VIFF…LAAM), 112-132 (MIFL…KSMF), 151-171 (PIGW…AITW), 208-228 (AFLT…TSTI), and 269-289 (FSYA…LSFL). Residues 73-290 (LQNTVIFFVV…LMVAVLSFLQ (218 aa)) enclose the ABC transmembrane type-1 domain.

Belongs to the binding-protein-dependent transport system permease family. MalFG subfamily.

Its subcellular location is the cell inner membrane. In terms of biological role, part of the binding-protein-dependent transport system for lactose. Probably responsible for the translocation of the substrate across the membrane. The sequence is that of Lactose transport system permease protein LacF (lacF) from Rhizobium radiobacter (Agrobacterium tumefaciens).